The chain runs to 209 residues: uncharacterized protein (209 aa).

The first 17 residues, 1–17, serve as a signal peptide directing secretion; sequence MKKLVTGLLALSLFLAA. A disordered region spans residues 17-106; the sequence is ACGQDSDQQK…SGQTTNNQKS (90 aa). A lipid anchor (N-palmitoyl cysteine) is attached at Cys-18. The S-diacylglycerol cysteine moiety is linked to residue Cys-18. A compositionally biased stretch (basic and acidic residues) spans 23–70; that stretch reads DQQKDSNKEKDDKAKTEQQDKKTNDSSKDKKDNKDDSKDVNKDNKDNS. Residues 71–106 are compositionally biased toward low complexity; the sequence is ANDNQQQSNSNATNNDQNQTNNNQSNSGQTTNNQKS.

The protein resides in the cell membrane. This is an uncharacterized protein from Staphylococcus aureus (strain MRSA252).